The sequence spans 1085 residues: Cell wall protein IFF6 (1085 aa).

The first 19 residues, 1–19 (MLLKQIFLPFFVLFNAINA), serve as a signal peptide directing secretion. The disordered stretch occupies residues 339 to 1060 (PSPGTDESSS…SSNSATIPEQ (722 aa)). Residues 342–528 (GTDESSSLSS…QSSSGTGQSS (187 aa)) are compositionally biased toward low complexity. Positions 529–538 (TEDEPIDSTE) are enriched in acidic residues. The span at 539–828 (SDTSSATDSS…TVTNTATNTG (290 aa)) shows a compositional bias: low complexity. N-linked (GlcNAc...) asparagine glycans are attached at residues Asn659, Asn782, Asn854, Asn860, Asn864, Asn874, Asn882, Asn886, Asn890, Asn896, Asn900, Asn910, Asn924, Asn932, Asn938, Asn952, Asn960, Asn964, Asn968, Asn976, Asn980, Asn992, Asn996, Asn1008, and Asn1016. The segment covering 847-1010 (NNGGGSNNGS…GSGSGSGNGS (164 aa)) has biased composition (gly residues). Positions 1018–1028 (SGSGSGSGNGQ) are enriched in gly residues. Low complexity predominate over residues 1031-1052 (GIITSSIGQPGSSTSTQGPSSS). Asn1062 carries the GPI-anchor amidated asparagine lipid modification. The propeptide at 1063-1085 (SGNHIKFTLFNGLLIGLVPIVFM) is removed in mature form.

The protein belongs to the HYR1/IFF family. Post-translationally, the GPI-anchor is attached to the protein in the endoplasmic reticulum and serves to target the protein to the cell surface. There, the glucosamine-inositol phospholipid moiety is cleaved off and the GPI-modified mannoprotein is covalently attached via its lipidless GPI glycan remnant to the 1,6-beta-glucan of the outer cell wall layer.

Its subcellular location is the secreted. It is found in the cell wall. It localises to the membrane. Functionally, GPI-anchored cell wall protein involved in cell wall organization, hyphal growth, as well as in host-fungal interaction and virulence. The sequence is that of Cell wall protein IFF6 (IFF6) from Candida albicans (strain SC5314 / ATCC MYA-2876) (Yeast).